The sequence spans 873 residues: Bifunctional levopimaradiene synthase, chloroplastic (873 aa).

Residues 1 to 59 constitute a chloroplast transit peptide; the sequence is MAGVLFANLPCSLQLSPKVPFRQSTNILIPFHKRSSFGFNAQHCVRSHLRLRWNCVGIH. Residue lysine 271 participates in substrate binding. Mg(2+) contacts are provided by aspartate 405 and aspartate 407. Residues 405–408 carry the DXDD motif motif; that stretch reads DVDD. A substrate-binding site is contributed by lysine 492. Positions 624, 628, 769, 773, and 777 each coordinate Mg(2+). The short motif at 624 to 628 is the DDXXD motif element; sequence DDLYD.

It belongs to the terpene synthase family. Tpsd subfamily. The cofactor is Mg(2+). As to expression, expressed in roots.

The protein localises to the plastid. It localises to the chloroplast. The catalysed reaction is (2E,6E,10E)-geranylgeranyl diphosphate = (+)-copalyl diphosphate. It catalyses the reaction (+)-copalyl diphosphate = abieta-8(14),12-diene + diphosphate. It participates in terpene metabolism; ginkgolide biosynthesis. Catalyzes the initial cyclization step in the biosynthesis of ginkgolides, a structurally unique family of diterpenoids that are highly specific platelet-activating-factor receptor antagonists. Bifunctional enzyme that catalyzes two sequential cyclizations of geranylgeranyl diphosphate (GGPP) to levopimaradiene. The protein is Bifunctional levopimaradiene synthase, chloroplastic (LPS) of Ginkgo biloba (Ginkgo).